A 597-amino-acid chain; its full sequence is MHQVFYQKYRPINFKQTLGQESIRKILVNAINRDKLPNGYIFSGERGTGKTTFAKIIAKAINCLNWDQIDVCNSCDVCKSINTNSAIDIVEIDAASKNGINDIRELVENVFNHPFTFKKKVYILDEAHMLTTQSWGGLLKTLEESPPYVLFIFTTTEFNKIPLTILSRCQSFFFKKITSDLILERLNDIAKKEKIKIEKDALIKIADLSQGSLRDGLSLLDQISNFSDSEKISITDVEKTFNIVDRNAKFTFIKAVLSGDIKEAFNLLDDFESNGLNFTYFLRELFALTVNLYAYAKLKNINVLDSTEKTMIETLNFEKQHYAFLIKAIEENTNFGLSQLTLIDRLKAIVISYNEFFNQKPLTISSPSNEKSLHLETEYLEKKKIKKSNHKQDQKHFSLFEKSFIDKSEKTPKNDEVTNNKFLDTSKLNLANIALAINAFNDNKWINHFQNLLSVFQTKFNDKDKQNNLSYFNNFIDKYSARDIVKATKIVKASSFGIVILFEDQKIAMRLWKEAIEEGNVQATIFQIFNQNLFLASFSEHQYKTTITEETKNQKYQTEVLNLTQLENLAKPFLKEKKRSLSQKMVDKYFKGLFEEK.

Residue 44–51 (GERGTGKT) coordinates ATP. Cysteine 63, cysteine 72, cysteine 75, and cysteine 78 together coordinate Zn(2+).

This sequence belongs to the DnaX/STICHEL family. DNA polymerase III contains a core (composed of alpha, epsilon and theta chains) that associates with a tau subunit. This core dimerizes to form the POLIII' complex. PolIII' associates with the gamma complex (composed of gamma, delta, delta', psi and chi chains) and with the beta chain to form the complete DNA polymerase III complex.

It carries out the reaction DNA(n) + a 2'-deoxyribonucleoside 5'-triphosphate = DNA(n+1) + diphosphate. Functionally, DNA polymerase III is a complex, multichain enzyme responsible for most of the replicative synthesis in bacteria. This DNA polymerase also exhibits 3' to 5' exonuclease activity. This Mycoplasma genitalium (strain ATCC 33530 / DSM 19775 / NCTC 10195 / G37) (Mycoplasmoides genitalium) protein is DNA polymerase III subunit gamma/tau (dnaX).